A 386-amino-acid polypeptide reads, in one-letter code: MNIHEYQGKAVLRSYGVSVPNGKVAFTVEEAVEAAKELGTDVCVVKAQIHAGGRGKAGGVKVAKNLDEVRTYAESILGTTLVTHQTGPEGKEVKRLLIEEGCDIKKEYYVGLVLDRATSQVVLMASEEGGTEIEEVAEKTPEKIFKEYIDPAVGLQGFQARRIAFNINIPKELVGQAVKFMMGLYRAFIEKDCSIAEINPLVTTGDGKVMALDAKLNFDSNALYRHKDILELRDLDEEDAKEIEASKYDLNYIPLDGNIGCMVNGAGLAMATMDIIKHYHGDPANFLDVGGGATAEKVTEAFKIILSDKNVKGIFVNIFGGIMKCDVIAEGVIEATKQVGLELPLVVRLEGTNVELGKKILNESGLNIVAAESMADGAQKIVSLVG.

The region spanning 9–244 (KAVLRSYGVS…LDEEDAKEIE (236 aa)) is the ATP-grasp domain. ATP contacts are provided by residues K46, 53 to 55 (GRG), E99, C102, and E107. Residues N199 and D213 each coordinate Mg(2+). Substrate-binding positions include N264 and 321–323 (GIM).

The protein belongs to the succinate/malate CoA ligase beta subunit family. In terms of assembly, heterotetramer of two alpha and two beta subunits. Mg(2+) serves as cofactor.

It carries out the reaction succinate + ATP + CoA = succinyl-CoA + ADP + phosphate. It catalyses the reaction GTP + succinate + CoA = succinyl-CoA + GDP + phosphate. The protein operates within carbohydrate metabolism; tricarboxylic acid cycle; succinate from succinyl-CoA (ligase route): step 1/1. Functionally, succinyl-CoA synthetase functions in the citric acid cycle (TCA), coupling the hydrolysis of succinyl-CoA to the synthesis of either ATP or GTP and thus represents the only step of substrate-level phosphorylation in the TCA. The beta subunit provides nucleotide specificity of the enzyme and binds the substrate succinate, while the binding sites for coenzyme A and phosphate are found in the alpha subunit. The chain is Succinate--CoA ligase [ADP-forming] subunit beta from Bacillus thuringiensis (strain Al Hakam).